The chain runs to 136 residues: Small ribosomal subunit protein uS8 (136 aa).

Belongs to the universal ribosomal protein uS8 family. In terms of assembly, part of the 30S ribosomal subunit. Contacts proteins S5 and S12.

In terms of biological role, one of the primary rRNA binding proteins, it binds directly to 16S rRNA central domain where it helps coordinate assembly of the platform of the 30S subunit. The sequence is that of Small ribosomal subunit protein uS8 from Persephonella marina (strain DSM 14350 / EX-H1).